Here is a 379-residue protein sequence, read N- to C-terminus: Anhydro-N-acetylmuramic acid kinase (379 aa).

9 to 16 (GTSADGVD) is a binding site for ATP.

Belongs to the anhydro-N-acetylmuramic acid kinase family.

It carries out the reaction 1,6-anhydro-N-acetyl-beta-muramate + ATP + H2O = N-acetyl-D-muramate 6-phosphate + ADP + H(+). The protein operates within amino-sugar metabolism; 1,6-anhydro-N-acetylmuramate degradation. It functions in the pathway cell wall biogenesis; peptidoglycan recycling. Functionally, catalyzes the specific phosphorylation of 1,6-anhydro-N-acetylmuramic acid (anhMurNAc) with the simultaneous cleavage of the 1,6-anhydro ring, generating MurNAc-6-P. Is required for the utilization of anhMurNAc either imported from the medium or derived from its own cell wall murein, and thus plays a role in cell wall recycling. The polypeptide is Anhydro-N-acetylmuramic acid kinase (Parasynechococcus marenigrum (strain WH8102)).